The following is a 504-amino-acid chain: Maturase K (504 aa).

This sequence belongs to the intron maturase 2 family. MatK subfamily.

The protein resides in the plastid. Its subcellular location is the chloroplast. In terms of biological role, usually encoded in the trnK tRNA gene intron. Probably assists in splicing its own and other chloroplast group II introns. This is Maturase K from Arabidopsis thaliana (Mouse-ear cress).